A 76-amino-acid chain; its full sequence is MEKKIIFLCFLVALLTFPEFISSEVIRDSVIHDEEKFANRSYCIKTCATEFTGGDESRIKDVRPRHYKCVCWYYSD.

Positions 1 to 23 are cleaved as a signal peptide; that stretch reads MEKKIIFLCFLVALLTFPEFISS.

In terms of processing, contains 2 disulfide bonds. Expressed by the venom gland.

The protein localises to the secreted. In Scolopendra dehaani (Thai centipede), this protein is U-scoloptoxin(15)-Ssd3b.